A 545-amino-acid polypeptide reads, in one-letter code: CTP synthase (545 aa).

Residues 1–266 form an amidoligase domain region; sequence MTTKYIFVTG…DSYFTERFGL (266 aa). Position 14 (Ser-14) interacts with CTP. Ser-14 is a UTP binding site. ATP-binding positions include 15-20 and Asp-72; that span reads SLGKGI. Positions 72 and 140 each coordinate Mg(2+). Residues 147–149, 187–192, and Lys-223 contribute to the CTP site; these read DIE and KTKPTQ. UTP is bound by residues 187-192 and Lys-223; that span reads KTKPTQ. Residue 239–241 coordinates ATP; that stretch reads KDV. The Glutamine amidotransferase type-1 domain maps to 291-542; that stretch reads TIGMVGKYVS…VKAAGEYQKR (252 aa). Residue Gly-352 participates in L-glutamine binding. The active-site Nucleophile; for glutamine hydrolysis is Cys-379. L-glutamine-binding positions include 380–383, Glu-403, and Arg-470; that span reads LGMQ. Active-site residues include His-515 and Glu-517.

The protein belongs to the CTP synthase family. Homotetramer.

The enzyme catalyses UTP + L-glutamine + ATP + H2O = CTP + L-glutamate + ADP + phosphate + 2 H(+). It carries out the reaction L-glutamine + H2O = L-glutamate + NH4(+). The catalysed reaction is UTP + NH4(+) + ATP = CTP + ADP + phosphate + 2 H(+). The protein operates within pyrimidine metabolism; CTP biosynthesis via de novo pathway; CTP from UDP: step 2/2. Allosterically activated by GTP, when glutamine is the substrate; GTP has no effect on the reaction when ammonia is the substrate. The allosteric effector GTP functions by stabilizing the protein conformation that binds the tetrahedral intermediate(s) formed during glutamine hydrolysis. Inhibited by the product CTP, via allosteric rather than competitive inhibition. In terms of biological role, catalyzes the ATP-dependent amination of UTP to CTP with either L-glutamine or ammonia as the source of nitrogen. Regulates intracellular CTP levels through interactions with the four ribonucleotide triphosphates. This Aeromonas hydrophila subsp. hydrophila (strain ATCC 7966 / DSM 30187 / BCRC 13018 / CCUG 14551 / JCM 1027 / KCTC 2358 / NCIMB 9240 / NCTC 8049) protein is CTP synthase.